The chain runs to 345 residues: Arginase (345 aa).

Residues 1–16 (MKETAAAKFERQHMDS) are compositionally biased toward basic and acidic residues. Residues 1–34 (MKETAAAKFERQHMDSPDLGTDDDDKMSPATSPF) are disordered. 6 residues coordinate Mn(2+): Ile-101, His-124, Ser-126, Gly-128, Ile-232, and Cys-234.

This sequence belongs to the arginase family. Homotrimer. Mn(2+) is required as a cofactor.

It carries out the reaction L-arginine + H2O = urea + L-ornithine. It participates in nitrogen metabolism; urea cycle; L-ornithine and urea from L-arginine: step 1/1. The enzyme activity is increased in the range of 20-50% upon the addition of Mn(2+) (1 mM), Co(2+) (1 mM), Ni(2+) (1 and 5 mM) and K(+) (5 mM). In contrast, the addition of Cu(2+), Zn(2+), Ca(2+), Mg(2+), Fe(2+) (both 1 and 5 mM), and Co(2+) (5 mM) strongly suppresses the arginase activity. SDS (1%) and EDTA (1 mM) are the most potent inhibitors. Reducing agents DTT (1 mM), PMSF (1 mM) and beta-mercaptoethanol (1 mM) also significantly inhibit activity by 85%, 64% and 35%, respectively. Surfactants Triton X-100 (1%), Tween-80 (1%) and Tween-20 (1%) are more tolerant, showing a slight decrease of arginase activity in the range of 10-30%. In terms of biological role, cold-active L-arginase that catalyzes the hydrolysis of L-arginine to L-ornithine and urea, an essential reaction in the urea cycle for toxic ammonia removal and cell proliferation. Is not able to use D-arginine or L-canavanine as substrates. This Glaciozyma antarctica (strain PI12) (Antarctic psychrophilic yeast) protein is Arginase.